Consider the following 132-residue polypeptide: uncharacterized protein (132 aa).

The first 18 residues, 1–18, serve as a signal peptide directing secretion; that stretch reads MRKIISMLFIPLFIFAMA.

This is an uncharacterized protein from Aquifex aeolicus (strain VF5).